The primary structure comprises 4377 residues: MKVDRTKLKKTPTEAPADCRALIDKLKVCNDEQLLLELQQIKTWNIGKCELYHWVDLLDRFDGILADAGQTVENMSWMLVCDRPEKEQLKMLLLAVLNFTALLIEYSFSRHLYSSIEHLTTLLASSDMQVVLAVLNLLYVFSKRSNYITRLGSDKRTPLLTRLQHLAESWGGKENGFGLAECCRDLQMLKYPPSATTLHFEFYADPGAEVKIEKRTTSNTLHYIHIEQLDKISESPSEIMESLTKMYSIPKDKQMLLFTHIRLAHGFSNHRKRLQAVQARLHAISILVYSNALQESANSILYNGLIEELVDVLQITDKQLMEIKAASLRTLTSIVHLERTPKLSSIIDCTGTASYHGFLPVLVRNCIQAMIDPSMDPYPHQFATALFSFLYHLASYDAGGEALVSCGMMEALLKVIKFLGDEQDQITFVTRAVRVVDLITNLDMAAFQSHSGLSIFIYRLEHEVDLCRKECPFVIKPKIQRPSTTQEGEEMETDMDGVQCIPQRAALLKSMLNFLKKAIQDPAFSDGIRHVMDGSLPTSLKHIISNAEYYGPSLFLLATEVVTVFVFQEPSLLSSLQDNGLTDVMLHALLIKDVPATREVLGSLPNVFSALCLNARGLQSFVQCQPFERLFKVLLSPDYLPAMRRRRSSDPLGDTASNLGSAVDELMRHQPTLKTDATTAIIKLLEEICNLGRDPKYICQKPSIQKADGTATAPPPRSNHAAEEASSEDEEEEEVQAMQSFNSAQQNETEPNQQVVGTEERIPIPLMDYILNVMKFVESILSNNTTDDHCQEFVNQKGLLPLVTILGLPNLPIDFPTSAACQAVAGVCKSILTLSHEPKVLQEGLLQLDLILSSLEPLHRPIESPGGSVLLRELACAGNVADATLSAQATPLLHALTAAHAYIMMFVHTCRVGQSEIRSISVNQWGSQLGLSVLSKLSQLYCSLVWESTVLLSLCTPNSLPSGCEFGQADMQKLVPKDEKAGTTQGGKRSDGEQDGTAGSMDASAQGLLEGIELDGDTLAPMETDEPSSSDSKGKSKITPAMAARIKQIKPLLSASSRLGRALAELFGLLVKLCVGSPVRQRRSHHAASTTTAPTPAARSTASALTKLLTKGLSWQPPPYTPTPRFRLTFFICSVGFTSPMLFDERKYPYHLMLQKFLCSGGHNALFETFNWALSMGGKVPVSEGLEHSDLPDGTGEFLDAWLMLVEKMVNPTTVLESPHSLPAKLPGGVQSFPQFSALRFLVVTQKAAFTCIKNLWNRKPLKVYGGRMAESMLAILCHILRGEPVIRERLSKEKEGSRGEEEAGQEEGGSRREPQVNQQQLQQLMDMGFTREHAMEALLNTSTMEQATEYLLTHPPPIIGGVVRDLSMSEEDQMMRAIAMSLGQDIPMDQRAESPEEVACRKEEEERKAREKQEEEEAKCLEKFQDADPLEQDELHTFTDTMLPGCFHLLDELPDTVYRVCDLIMTAIKRNGADYRDMILKQVVNQVWEAADVLIKAALPLTTSDTKTVSEWISQMATLPQASNLATRILLLTLLFEELKLPCAWVVESSGILNVLIKLLEVVQPCLQAAKEQKEVQTPKWITPVLLLIDFYEKTAISSKRRAQMTKYLQSNSNNWRWFDDRSGRWCSYSASNNSTIDSAWKSGETSVRFTAGRRRYTVQFTTMVQVNEETGNRRPVMLTLLRVPRLSKNSKSSNGQELEKTLEESKETDIKHKENKGNDIPLALESTNTEKEASLDETKIGEILIQGLTEDMVTVLIRACVSMLGVPVDPDTLHATLRLCLRLTRDHKYAMMFAELKSTRMILNLTQSSGFNGFTPLVTLLLRHIIEDPCTLRHTMEKVVRSAATSGAGSTTSGVVSGSLGSREINYILRVLGPAACRNPDIFTEVANCCIRIALPAPRGSGTASDDEFENLRIKGPNAVQLVKTTPLKPSSLPVIPDTIKEVIYDMLNALAAYHAPEEADKSDPKPGGTTQEVGQLLQDMGDDVYQQYRSLTRQSSDFDTQSGFSLNSQVFAADGAPAETSTTGTSQGEASTPEETREGKKDKEGDRTSEEGKQKSKGSKPLMPTSTILRLLAELVRSYVGIATLIANYSYTVGQSELIKEDCSVLAFVLDHLLPHTQNAEDKDTPALARLFLASLAAAGSGTDAQVALVNEVKAALGRALAMAESTEKHARLQAVMCIISTIMESCPSTSSFYSSATAKTQHNGMNNIIRLFLKKGLVNDLARVPHSLDLSSPNMANTVNAALKPLETLSRIVNQPSSLFGSKSASSKNKSEQDAQGASQDSSSHQQDPGEPGEAEVQEEDHDVTQTEVADGDIMDGEAETDSVVIAGQPEVLSSQEMQVENELEDLIDELLERDGGSGNSTIIVSRSGEDESQEDVLMDEAPSNLSQASTLQANREDSMNILDPEDEEEHTQEEDSSGSNEDEDDSQDEEEEEEEDEEDDQEDDEGEEGDEDDDDDGSEMELDEDYPDMNASPLVRFERFDREDDLIIEFDNMFSSATDIPPSPGNIPTTHPLMVRHADHSSLTLGSGSSTTRLTQGIGRSQRTLRQLTANTGHTIHVHYPGNRQPNPPLILQRLLGPSAAADILQLSSSLPLQSRGRARLLVGNDDVHIIARSDDELLDDFFHDQSTATSQAGTLSSIPTALTRWTEECKVLDAESMHDCVSVVKVPIVNHLEFLRDEELEERREKRRKQLAEEETKIIDKGKEDKENRDQSAQCTVTKTNDSTEQNVSDGTPMPDSYPTTPSSTDAPTSESKETLGTLQPSQQQPALPPPPSLGEIPQELQSPAEEVANSTQLLMPIELEELGPTRPSGEAETTQMELSPAPTITSLSPERAEDSDALTAVSSQLEGSPMDTSSLASCTLEEAVGDTPAAGSSEQPTAGSSTPGDAPSVVAEVQGRPDVSRESNQPPEDSSPPASSESSSTRDSAVAISGADSRGILEEPLPSTSSEEEDPLAGISLPEGVDPSFLAALPDDIRREVLQNQLGIRPPTRSAPSSNSSAPAVVGNPGVTEVSPEFLAALPPAIQEEVLAQQRAEQQRRELAQNASSDTPMDPVTFIQTLPSDLRRSVLEDMEDSVLAVMPPDIAAEAQALRREQEARQRQLMHERLFGHSSTSALSAILRSPAFTSRLSGNRGVQYTRLAVQRGGTFQMGGSSSHNRPSGSNVDTLLRLRGRLLLDHEALSCLLVLLFVDEPKLNTSRLHRVLRNLCYHAQTRHWVIRSLLSILQRSSESELCIETPKLSTSEERGKKSSKSCASSSHENRPLDLLHKMESKSSNQLSWLSVSMDAALGCRTNIFQIQRSGGRKHTEKHASSGSTVHIHPQAAPVVCRHVLDTLIQLAKVFPSHFTQQRTKETNCESDRERGSKQACSPCSSQSSSSGICTDFWDLLVKLDNMNVSRKGKNSVKSVPVSSGGEGETSPHSLEASPLGQLMNMLSHPVIRRSSLLTEKLLRLLSLISIALPENKVSEVQTNSSNSGSSTAATSNTSTTTTTTTTATAPTPTPPAATTPVTSAPALVAATAISTITVAASTTVTTPTTATTTVSTSTTKGSKSPAKVGEGGSGIDFKMVSSGLTENQLQLSVEVLTSHSCSEEGLEDAANVLLQLSRGDSGTRDTVLKLLLNGARHLGYTLCKQIGTLLAELREYNLEQQRRAQCETLSPDGLPEEQPQTTKLKGKMQSRFDMAENVVIVASQKRPLGGRELQLPSMSMLTSKTSTQKFFLRVLQVIIQLRDDTRRANKKAKQTGRLGSSGLGSASSIQAAVRQLEAEADAIIQMVREGQRARRQQQAATSESSNQSETSVRREESPMDVDQPSPSAQDTQSIVISDGTPQGEKEKEEKPPELPLLSEQLSLDELWDMLGECLKELEESHDQHAVLVLQPAVEAFFLVHATERESKPPVRDTRESQLAHIKDEPPPLSPAPLTPATPSSLDPFFSREPSSMHISSSLPPDTQKFLRFAETHRTVLNQILRQSTTHLADGPFAVLVDYIRVLDFDVKRKYFRQELERLDEGLRKEDMAVHVRRDHVFEDSYRELHRKSPEEMKNRLYIVFEGEEGQDAGGLLREWYMIISREMFNPMYALFRTSPGDRVTYTINPSSHCNPNHLSYFKFVGRIVAKAVYDNRLLECYFTRSFYKHILGKSVRYTDMESEDYHFYQGLVYLLENDVSTLGYDLTFSTEVQEFGVCEVRDLKPNGANILVTEENKKEYVHLVCQMRMTGAIRKQLAAFLEGFYEIIPKRLISIFTEQELELLISGLPTIDIDDLKSNTEYHKYQSNSIQIQWFWRALRSFDQADRAKFLQFVTGTSKVPLQGFAALEGMNGIQKFQIHRDDRSTDRLPSAHTCFNQLDLPAYESFEKLRHMLLLAIQECSEGFGLA.

Phosphoserine occurs at positions 648 and 649. Disordered stretches follow at residues Lys706–Thr758, Asp978–Met1001, and Thr1018–Ile1038. Residues Ala725 to Val735 show a composition bias toward acidic residues. The span at Ala737–Val756 shows a compositional bias: polar residues. A Phosphoserine modification is found at Ser740. The residue at position 1084 (Ser1084) is a Phosphoserine. The span at Leu1291–Glu1302 shows a compositional bias: basic and acidic residues. Residues Leu1291–Gln1320 are disordered. The region spanning Gln1316–His1355 is the UBA domain. 4 positions are modified to phosphoserine: Ser1368, Ser1370, Ser1382, and Ser1395. The region spanning Ser1370–Met1389 is the UIM domain. Residues Pro1396–Glu1415 form a disordered region. One can recognise a WWE domain in the interval Arg1603–Leu1680. Positions Lys1690–Lys1733 are disordered. Basic and acidic residues predominate over residues Glu1699–Gly1719. Ser1907 bears the Phosphoserine mark. Disordered regions lie at residues Ala2019–Leu2065, Ser2262–Gln2343, and Leu2355–Leu2479. Polar residues predominate over residues Glu2022–Ala2033. Thr2035 is subject to Phosphothreonine. Residues Glu2037 to Gln2057 show a composition bias toward basic and acidic residues. Low complexity-rich tracts occupy residues Ser2262–Ser2271 and Asp2278–Gln2291. Residue Ser2266 is modified to Phosphoserine. Lys2267 is modified (N6-acetyllysine). Acidic residues-rich tracts occupy residues Glu2295–His2306 and Ala2314–Thr2325. Phosphoserine occurs at positions 2362, 2365, and 2391. Residues Ser2388 to Ala2398 show a composition bias toward polar residues. Over residues Asp2408–Pro2472 the composition is skewed to acidic residues. Residues Ser2527, Ser2532, and Ser2535 each carry the phosphoserine modification. Thr2554 carries the phosphothreonine modification. 3 positions are modified to phosphoserine: Ser2584, Ser2595, and Ser2619. Basic and acidic residues predominate over residues Ile2704 to Asp2716. Disordered stretches follow at residues Ile2704–Pro2970, Ile2991–Pro3012, and Gln3036–Val3059. Residues Gln2717–Asp2736 are compositionally biased toward polar residues. Residues Thr2738 to Ser2756 show a composition bias toward low complexity. At Thr2751 the chain carries Phosphothreonine. Polar residues-rich tracts occupy residues Ala2818–Ser2835, Ala2847–Ser2864, and Ala2877–Pro2890. Ser2826, Ser2833, Ser2835, Ser2861, Ser2887, and Ser2888 each carry phosphoserine. Position 2889 is a phosphothreonine (Thr2889). Composition is skewed to low complexity over residues Pro2913 to Ala2932 and Pro2993 to Ala3007. Residue Ser2918 is modified to Phosphoserine. Phosphoserine occurs at positions 3116, 3117, 3122, 3127, and 3135. Position 3149 is an omega-N-methylarginine (Arg3149). Disordered stretches follow at residues Pro3243–Asn3266, Thr3352–Ser3383, Gly3405–Ala3429, Ser3471–Val3514, and Thr3539–Ser3566. The segment covering Arg3355–Ser3369 has biased composition (basic and acidic residues). Residues Lys3370 to Ser3383 show a composition bias toward low complexity. 2 stretches are compositionally biased toward low complexity: residues Thr3475 to Pro3503 and Thr3539 to Thr3552. Phosphoserine is present on residues Ser3557, Ser3663, Ser3753, Ser3758, Ser3760, and Ser3761. The tract at residues Thr3738–Ala3759 is disordered. Positions Gly3749–Ala3759 are enriched in low complexity. 2 disordered regions span residues Glu3782 to Leu3850 and Arg3897 to Leu3951. The segment covering Thr3794 to Thr3803 has biased composition (polar residues). A phosphoserine mark is found at Ser3810, Ser3818, and Ser3830. The span at Pro3817–Val3828 shows a compositional bias: polar residues. Thr3833 is subject to Phosphothreonine. Basic and acidic residues-rich tracts occupy residues Gly3836–Pro3845 and Arg3897–Pro3918. Residues Ser3909 and Ser3922 each carry the phosphoserine modification. Residues Pro3919 to Pro3928 show a composition bias toward pro residues. Thr3927 and Thr3930 each carry phosphothreonine. The segment covering Glu3941 to Leu3951 has biased composition (polar residues). The 337-residue stretch at Ser4041–Ala4377 folds into the HECT domain. Position 4274 is a phosphotyrosine (Tyr4274). Residue Cys4344 is the Glycyl thioester intermediate of the active site.

It belongs to the UPL family. TOM1/PTR1 subfamily. Interacts with isoform p19ARF of CDKN2A which strongly inhibits HUWE1 ubiquitin ligase activity. Interacts with MYCN, POLB and CDC6. Interacts with PA2G4. Interacts with NR1D1. Interacts with AMBRA1. Interacts with HAPSTR1. Interacts with HAPSTR2. In hepatocytes, interacts with PAQR3; the interaction promotes PPARA poylubiquitination and STUB1-mediated degradation. In terms of processing, phosphorylated on tyrosine; phosphorylation is probably required for its ability to inhibit TP53 transactivation. In terms of tissue distribution, widely expressed.

Its subcellular location is the cytoplasm. It is found in the nucleus. The protein localises to the mitochondrion. The enzyme catalyses S-ubiquitinyl-[E2 ubiquitin-conjugating enzyme]-L-cysteine + [acceptor protein]-L-lysine = [E2 ubiquitin-conjugating enzyme]-L-cysteine + N(6)-ubiquitinyl-[acceptor protein]-L-lysine.. The protein operates within protein modification; protein ubiquitination. Its function is as follows. E3 ubiquitin-protein ligase which mediates ubiquitination and subsequent proteasomal degradation of target proteins. Regulates apoptosis by catalyzing the polyubiquitination and degradation of MCL1. Mediates monoubiquitination of DNA polymerase beta (POLB) at 'Lys-41', 'Lys-61' and 'Lys-81', thereby playing a role in base-excision repair. Also ubiquitinates the p53/TP53 tumor suppressor and core histones including H1, H2A, H2B, H3 and H4. Ubiquitinates MFN2 to negatively regulate mitochondrial fusion in response to decreased stearoylation of TFRC. Ubiquitination of MFN2 also takes place following induction of mitophagy; AMBRA1 acts as a cofactor for HUWE1-mediated ubiquitination. Regulates neural differentiation and proliferation by catalyzing the polyubiquitination and degradation of MYCN. May regulate abundance of CDC6 after DNA damage by polyubiquitinating and targeting CDC6 to degradation. Mediates polyubiquitination of PA2G4. Acts in concert with MYCBP2 to regulate the circadian clock gene expression by promoting the lithium-induced ubiquination and degradation of NR1D1. Binds to an upstream initiator-like sequence in the preprodynorphin gene. Mediates HAPSTR1 degradation, but is also a required cofactor in the pathway by which HAPSTR1 governs stress signaling. Acts as a regulator of the JNK and NF-kappa-B signaling pathways by mediating assembly of heterotypic 'Lys-63'-/'Lys-48'-linked branched ubiquitin chains that are then recognized by TAB2: HUWE1 mediates branching of 'Lys-48'-linked chains of substrates initially modified with 'Lys-63'-linked conjugates by TRAF6. 'Lys-63'-/'Lys-48'-linked branched ubiquitin chains protect 'Lys-63'-linkages from CYLD deubiquitination. Ubiquitinates PPARA in hepatocytes. In Mus musculus (Mouse), this protein is E3 ubiquitin-protein ligase HUWE1 (Huwe1).